Reading from the N-terminus, the 169-residue chain is Small ribosomal subunit protein uS5c (169 aa).

The S5 DRBM domain maps to 17-80 (WQERVIQVRR…TDGRKNLINI (64 aa)).

The protein belongs to the universal ribosomal protein uS5 family. In terms of assembly, part of the 30S ribosomal subunit. Contacts protein S4.

It localises to the plastid. The protein resides in the chloroplast. In terms of biological role, with S4 and S12 plays an important role in translational accuracy. In Guillardia theta (Cryptophyte), this protein is Small ribosomal subunit protein uS5c (rps5).